The chain runs to 336 residues: Dihydroorotate dehydrogenase (quinone) (336 aa).

FMN is bound by residues 62 to 66 (AGLDK) and T86. K66 lines the substrate pocket. Residue 111–115 (NRFGF) participates in substrate binding. FMN contacts are provided by N139 and N172. N172 is a substrate binding site. Residue S175 is the Nucleophile of the active site. N177 contributes to the substrate binding site. Residues K217 and T245 each contribute to the FMN site. Residue 246 to 247 (NT) coordinates substrate. Residues G268, G297, and 318-319 (YS) contribute to the FMN site.

The protein belongs to the dihydroorotate dehydrogenase family. Type 2 subfamily. Monomer. FMN serves as cofactor.

It localises to the cell membrane. The catalysed reaction is (S)-dihydroorotate + a quinone = orotate + a quinol. It functions in the pathway pyrimidine metabolism; UMP biosynthesis via de novo pathway; orotate from (S)-dihydroorotate (quinone route): step 1/1. Its function is as follows. Catalyzes the conversion of dihydroorotate to orotate with quinone as electron acceptor. This is Dihydroorotate dehydrogenase (quinone) from Photobacterium profundum (strain SS9).